Reading from the N-terminus, the 177-residue chain is Translationally-controlled tumor protein homolog (177 aa).

In terms of domain architecture, TCTP spans M1–C177.

It belongs to the TCTP family.

It localises to the cytoplasm. Involved in calcium binding and microtubule stabilization. The chain is Translationally-controlled tumor protein homolog from Trichinella pseudospiralis (Parasitic roundworm).